The following is a 270-amino-acid chain: Hydroxyethylthiazole kinase (270 aa).

A substrate-binding site is contributed by methionine 46. The ATP site is built by arginine 120 and threonine 166. Glycine 193 serves as a coordination point for substrate.

Belongs to the Thz kinase family. It depends on Mg(2+) as a cofactor.

It carries out the reaction 5-(2-hydroxyethyl)-4-methylthiazole + ATP = 4-methyl-5-(2-phosphooxyethyl)-thiazole + ADP + H(+). Its pathway is cofactor biosynthesis; thiamine diphosphate biosynthesis; 4-methyl-5-(2-phosphoethyl)-thiazole from 5-(2-hydroxyethyl)-4-methylthiazole: step 1/1. In terms of biological role, catalyzes the phosphorylation of the hydroxyl group of 4-methyl-5-beta-hydroxyethylthiazole (THZ). This Herpetosiphon aurantiacus (strain ATCC 23779 / DSM 785 / 114-95) protein is Hydroxyethylthiazole kinase.